We begin with the raw amino-acid sequence, 182 residues long: Inner membrane-spanning protein YciB (182 aa).

The next 5 helical transmembrane spans lie at 22 to 42, 53 to 73, 76 to 96, 121 to 141, and 149 to 169; these read IYAATGALMATTLLQMIVVWV, ITLVLVLGFGAMTLFFHNEAF, WKVTVLYAAFGSALWISQFLF, FSWGLFFWMVGALNVYIAFYL, and FKVFGVLGLMLVSTLLTGIYI.

This sequence belongs to the YciB family.

The protein resides in the cell inner membrane. In terms of biological role, plays a role in cell envelope biogenesis, maintenance of cell envelope integrity and membrane homeostasis. The sequence is that of Inner membrane-spanning protein YciB from Tolumonas auensis (strain DSM 9187 / NBRC 110442 / TA 4).